The following is a 250-amino-acid chain: 7-cyano-7-deazaguanine synthase (250 aa).

21–31 lines the ATP pocket; that stretch reads FSGGQDSSVCL. Zn(2+) contacts are provided by cysteine 209, cysteine 224, cysteine 227, and cysteine 230.

Belongs to the QueC family. Zn(2+) serves as cofactor.

It carries out the reaction 7-carboxy-7-deazaguanine + NH4(+) + ATP = 7-cyano-7-deazaguanine + ADP + phosphate + H2O + H(+). It participates in purine metabolism; 7-cyano-7-deazaguanine biosynthesis. In terms of biological role, catalyzes the ATP-dependent conversion of 7-carboxy-7-deazaguanine (CDG) to 7-cyano-7-deazaguanine (preQ(0)). This is 7-cyano-7-deazaguanine synthase from Caulobacter sp. (strain K31).